We begin with the raw amino-acid sequence, 230 residues long: Orotidine 5'-phosphate decarboxylase (230 aa).

Residues Asp10, Lys31, 58–67, Thr117, Arg179, Gln188, Gly208, and Arg209 each bind substrate; that span reads DLKLHDIPNT. The active-site Proton donor is Lys60.

The protein belongs to the OMP decarboxylase family. Type 1 subfamily. In terms of assembly, homodimer.

It carries out the reaction orotidine 5'-phosphate + H(+) = UMP + CO2. Its pathway is pyrimidine metabolism; UMP biosynthesis via de novo pathway; UMP from orotate: step 2/2. Catalyzes the decarboxylation of orotidine 5'-monophosphate (OMP) to uridine 5'-monophosphate (UMP). The protein is Orotidine 5'-phosphate decarboxylase of Staphylococcus epidermidis (strain ATCC 12228 / FDA PCI 1200).